A 350-amino-acid chain; its full sequence is Outer membrane protein A (350 aa).

The N-terminal stretch at methionine 1–alanine 21 is a signal peptide. 8 beta stranded membrane-spanning segments follow: residues threonine 27–serine 37, glutamine 55–valine 66, valine 70–tryptophan 78, glutamine 96–proline 107, leucine 112–glycine 120, proline 146–alanine 155, isoleucine 160–glutamine 167, and leucine 186–arginine 194. A run of 4 repeats spans residues alanine 205–proline 206, alanine 207–proline 208, alanine 209–proline 210, and alanine 211–proline 212. Residues alanine 205–proline 212 are 4 X 2 AA tandem repeats of A-P. An OmpA-like domain is found at valine 214–lysine 342. Cysteine 315 and cysteine 327 are joined by a disulfide.

Belongs to the outer membrane OOP (TC 1.B.6) superfamily. OmpA family. Monomer and homodimer.

The protein resides in the cell outer membrane. In terms of biological role, with TolR probably plays a role in maintaining the position of the peptidoglycan cell wall in the periplasm. Acts as a porin with low permeability that allows slow penetration of small solutes; an internal gate slows down solute passage. Its function is as follows. Required for conjugation with F-type plasmids; probably serves as the mating receptor on recipient cells. In Salmonella typhi, this protein is Outer membrane protein A.